The following is a 186-amino-acid chain: Ribosome-recycling factor (186 aa).

Belongs to the RRF family.

The protein localises to the cytoplasm. Functionally, responsible for the release of ribosomes from messenger RNA at the termination of protein biosynthesis. May increase the efficiency of translation by recycling ribosomes from one round of translation to another. This is Ribosome-recycling factor from Methylibium petroleiphilum (strain ATCC BAA-1232 / LMG 22953 / PM1).